A 136-amino-acid polypeptide reads, in one-letter code: Biopolymer transport protein exbD2 (136 aa).

The Cytoplasmic segment spans residues 1–23; sequence MAFSTGGNRGPMADINVTPLVDV. Residues 24–44 form a helical membrane-spanning segment; sequence MLVLLIIFIVTAPIMTYPIAV. Over 45 to 136 the chain is Periplasmic; that stretch reads DLPQRVLNPP…SQMKKIGFMQ (92 aa).

The protein belongs to the ExbD/TolR family. As to quaternary structure, the accessory proteins ExbB and ExbD seem to form a complex with TonB.

Its subcellular location is the cell inner membrane. Functionally, involved in the TonB-dependent energy-dependent transport of various receptor-bound substrates. This chain is Biopolymer transport protein exbD2 (exbD2), found in Xanthomonas campestris pv. campestris (strain ATCC 33913 / DSM 3586 / NCPPB 528 / LMG 568 / P 25).